Reading from the N-terminus, the 225-residue chain is Cytidylate kinase (225 aa).

Residue 11-19 (GPAGVGKST) coordinates ATP.

Belongs to the cytidylate kinase family. Type 1 subfamily.

The protein localises to the cytoplasm. The enzyme catalyses CMP + ATP = CDP + ADP. It catalyses the reaction dCMP + ATP = dCDP + ADP. The protein is Cytidylate kinase of Lawsonia intracellularis (strain PHE/MN1-00).